The following is a 463-amino-acid chain: Trigger factor (463 aa).

Residues 162-243 (GDVVTLDLEA…VSQVAARELP (82 aa)) enclose the PPIase FKBP-type domain. The disordered stretch occupies residues 427 to 463 (TNGEIVDLDDEDETESTPETTEAAEAAEESTEDKPEA). Over residues 432-442 (VDLDDEDETES) the composition is skewed to acidic residues.

The protein belongs to the FKBP-type PPIase family. Tig subfamily.

It localises to the cytoplasm. It catalyses the reaction [protein]-peptidylproline (omega=180) = [protein]-peptidylproline (omega=0). Involved in protein export. Acts as a chaperone by maintaining the newly synthesized protein in an open conformation. Functions as a peptidyl-prolyl cis-trans isomerase. In Streptomyces avermitilis (strain ATCC 31267 / DSM 46492 / JCM 5070 / NBRC 14893 / NCIMB 12804 / NRRL 8165 / MA-4680), this protein is Trigger factor.